Here is a 591-residue protein sequence, read N- to C-terminus: Calnexin (591 aa).

The N-terminal stretch at 1–20 (MEGKWLLCLLLVLGTAAVEA) is a signal peptide. Topologically, residues 21 to 482 (HDGHDDDAID…QMLEAAEERP (462 aa)) are lumenal. Ca(2+)-binding residues include S75 and D118. An N6-acetyllysine modification is found at K138. C161 and C195 are joined by a disulfide. An alpha-D-glucoside contacts are provided by Y165, K167, Y186, and D193. Residues 261–347 (GNLLNDMTPP…EKPEDWDEDM (87 aa)) form a disordered region. Positions 275–320 (REIEDPEDRKPEDWDERPKIADPDAVKPDDWDEDAPSKIPDEEATK) are enriched in basic and acidic residues. A p domain (Extended arm) region spans residues 277 to 410 (IEDPEDRKPE…RKIPNPDFFE (134 aa)). Repeat copies occupy residues 279 to 291 (DPED…WDER), 296 to 308 (DPDA…WDED), 315 to 327 (DEEA…WLDD), 334 to 346 (DPDA…WDED), and 349 to 359 (GEWEAPQIANP). 4 X approximate repeats regions lie at residues 279 to 346 (DPED…WDED) and 349 to 406 (GEWE…IPNP). The segment covering 324-347 (WLDDEPEYIPDPDAEKPEDWDEDM) has biased composition (acidic residues). An interaction with PPIB region spans residues 327 to 360 (DEPEYIPDPDAEKPEDWDEDMDGEWEAPQIANPK). C361 and C367 form a disulfide bridge. 3 repeat units span residues 368-378 (GVWQRPMIDNP), 382-392 (GKWKPPMIDNP), and 396-406 (GIWKPRKIPNP). E426 contributes to the an alpha-D-glucoside binding site. D437 is a binding site for Ca(2+). A helical transmembrane segment spans residues 483 to 503 (WLWVVYILTVALPVFLVILFC). Residues C503 and C504 are each lipidated (S-palmitoyl cysteine). The Cytoplasmic portion of the chain corresponds to 504–591 (CSGKKQSNAM…SPRNRKPRRE (88 aa)). The interval 504 to 591 (CSGKKQSNAM…SPRNRKPRRE (88 aa)) is sufficient to mediate interaction with SGIP1. Basic and acidic residues predominate over residues 514–539 (EYKKTDAPQPDVKDEEGKEEEKNKRD). The tract at residues 514–591 (EYKKTDAPQP…SPRNRKPRRE (78 aa)) is disordered. S553 is subject to Phosphoserine. The segment covering 555–568 (AEEDGVTGSQDEED) has biased composition (acidic residues). At T561 the chain carries Phosphothreonine. The residue at position 563 (S563) is a Phosphoserine; by MAPK3. S582 carries the phosphoserine modification.

The protein belongs to the calreticulin family. Interacts with MAPK3/ERK1. Interacts with KCNH2. Associates with ribosomes. The palmitoylated form interacts with the ribosome-translocon complex component SSR1, promoting efficient folding of glycoproteins. Interacts with SERPINA2P/SERPINA2 and with the S and Z variants of SERPINA1. Interacts with SGIP1; involved in negative regulation of endocytosis. Interacts with PPIB. Interacts with SMIM22. Interacts with TMX2. Interacts with TMEM35A/NACHO. Interacts with CHRNA7. Interacts with reticulophagy regulators RETREG2 and RETREG3. Interacts with DNM1L; may form part of a larger protein complex at the ER-mitochondrial interface during mitochondrial fission. Interacts with ADAM7. Phosphorylated at Ser-563 by MAPK3/ERK1. Phosphorylation by MAPK3/ERK1 increases its association with ribosomes. Post-translationally, palmitoylation by DHHC6 leads to the preferential localization to the perinuclear rough ER. It mediates the association of calnexin with the ribosome-translocon complex (RTC) which is required for efficient folding of glycosylated proteins. In terms of processing, ubiquitinated, leading to proteasomal degradation. Probably ubiquitinated by ZNRF4. As to expression, expressed in sperm (at protein level).

It localises to the endoplasmic reticulum membrane. The protein resides in the mitochondrion membrane. The protein localises to the melanosome membrane. Functionally, calcium-binding protein that interacts with newly synthesized monoglucosylated glycoproteins in the endoplasmic reticulum. It may act in assisting protein assembly and/or in the retention within the ER of unassembled protein subunits. It seems to play a major role in the quality control apparatus of the ER by the retention of incorrectly folded proteins. Associated with partial T-cell antigen receptor complexes that escape the ER of immature thymocytes, it may function as a signaling complex regulating thymocyte maturation. Additionally it may play a role in receptor-mediated endocytosis at the synapse. In Mus musculus (Mouse), this protein is Calnexin (Canx).